The following is a 559-amino-acid chain: Thrombospondin-related anonymous protein (559 aa).

A signal peptide spans 1 to 25; sequence MNHLGNVKYLVIVFLIFFDLFLVNG. The Extracellular portion of the chain corresponds to 26 to 496; sequence RDVQNNIVDE…KKGESDNKYK (471 aa). Residues 48–234 enclose the VWFA domain; it reads DLYLLMDCSG…NVIGPFMKAV (187 aa). Residues Q77 and Q78 each participate in an isoglutamyl lysine isopeptide (Gln-Lys) (interchain with K-? in Factor 3(A)) cross-link. Residue N132 is glycosylated (N-linked (GlcNAc...) asparagine). Residues 241-287 enclose the TSP type-1 domain; sequence TASCGVWDEWSPCSVTCGKGTRSRKREILHEGCTSEIQEQCEEERCP. Intrachain disulfides connect C244/C273, C253/C281, and C257/C286. Positions 280–496 are disordered; the sequence is QCEEERCPPK…KKGESDNKYK (217 aa). Residues 283–292 show a composition bias toward basic and acidic residues; it reads EERCPPKWEP. The short motif at 307–309 is the Cell attachment site element; that stretch reads RGD. N-linked (GlcNAc...) asparagine glycosylation occurs at N310. Residues 370-400 are compositionally biased toward basic and acidic residues; that stretch reads KEVPSDVPKNPEDDREENFDIPKKPENKHDN. Polar residues predominate over residues 431–440; that stretch reads DPQSQDNNGN. A compositionally biased stretch (basic and acidic residues) spans 444–459; that stretch reads PNSEDRETRPHGRNNE. N460 carries an N-linked (GlcNAc...) asparagine glycan. Over residues 466–495 the composition is skewed to basic and acidic residues; sequence KYNDTPKHPEREEHEKPDNNKKKGESDNKY. The chain crosses the membrane as a helical span at residues 497–515; sequence IAGGIAGGLALLACAGLAY. The Cytoplasmic segment spans residues 516-559; it reads KFVVPGAATPYAGEPAPFDETLGEEDKDLDEPEQFRLPEENEWN. A disordered region spans residues 523–559; that stretch reads ATPYAGEPAPFDETLGEEDKDLDEPEQFRLPEENEWN. Positions 536 to 547 are enriched in acidic residues; sequence TLGEEDKDLDEP. Basic and acidic residues predominate over residues 548–559; sequence EQFRLPEENEWN.

It localises to the cell membrane. This is Thrombospondin-related anonymous protein (TRAP) from Plasmodium falciparum.